The following is a 313-amino-acid chain: Putative S-adenosyl-L-methionine-dependent methyltransferase MAV_5150 (313 aa).

S-adenosyl-L-methionine contacts are provided by residues D139 and 168–169 (DL).

This sequence belongs to the UPF0677 family.

Its function is as follows. Exhibits S-adenosyl-L-methionine-dependent methyltransferase activity. This is Putative S-adenosyl-L-methionine-dependent methyltransferase MAV_5150 from Mycobacterium avium (strain 104).